The primary structure comprises 123 residues: Protein lgg-1 (123 aa).

Gly116 is lipidated: Phosphatidylethanolamine amidated glycine. A propeptide spans 117 to 123 (GEVEKKE) (removed in mature form).

Belongs to the ATG8 family. In terms of assembly, interacts with sepa-1 (via the LIR motifs); the interaction is direct. Interacts with allo-1 (via the LIR motif). Interacts with sqst-1 (via the LIR motifs); the interaction is direct. Both lipidated and unlipidated forms interact with epg-7 (via the LIR motif); the interaction is direct. Interacts with epg-2 (via the LIR motifs); the interaction is direct. Interacts with atg-13; the interaction is direct. Interacts with unc-51 (via the LIR motif); the interaction is direct. Interacts with atg-7; the interaction is direct. Interacts with atg-3. The interaction with atg-7 and atg-3 may be required for the lipidation of lgg-1. Post-translationally, cleaved by atg-4.1 and/or atg-4.2, after Gly-116 to form a thioester bond with 'Cys-523' of atg-7 (E1-like activating enzyme) before being transferred to 'Cys-255' of atg-3 (E2 conjugating enzyme), in order to be amidated with phosphatidylethanolamine. This lipid modification anchors lgg-1 to membranes and can be reversed by atg-4.2, releasing soluble lgg-1. C-terminal cleavage is essential for autophagosome initiation and biogenesis. Lipidation is not essential for autophagy or development but the lipidated form is involved in cargo recognition and autophagosome biogenesis. Lipidation regulates lgg-2-positive autophagosome formation. Expressed in PLML touch receptor neuron and in the ventral nerve cord. Expressed in AIY interneurons.

The protein localises to the preautophagosomal structure. It localises to the cytoplasmic vesicle. It is found in the autophagosome. The protein resides in the autophagosome membrane. Its subcellular location is the lysosome lumen. The protein localises to the mitochondrion. It localises to the cytoplasm. It is found in the phagosome membrane. The protein resides in the cell membrane. Its subcellular location is the cell projection. The protein localises to the dendrite. It localises to the perikaryon. In terms of biological role, ubiquitin-like modifier involved in the formation of autophagosomal vacuoles (autophagosomes). When lipidated mediates tethering between adjacent membranes and stimulates membrane fusion during autophagy. Recruits lipidated-lgg-2 to maturing autophagosomes. Acts in the aggrephagy pathway, which is the macroautophagic degradation of ubiquitinated protein aggregates, and preferentially interacts with autophagy proteins and substrates containing LIR motifs to mediate autophagosome formation and protein aggregate degradation. In particular, binds to components of the unc-51-atg-13 complex to regulate autophagosome formation and cargo sequestration. Required for the degradation of specific sepa-1- and sqst-1-containing protein aggregates during embryogenesis. Involved in allophagy, which is an autophagic process in which paternal mitochondria and organelles are degraded during fertilization, and moreover is required for the formation of lgg-2-positive allophagic autophagosomes in embryos. Involved in the clearance of apoptotic cells by promoting the delivery of engulfed apoptotic cells to the lysosome. Plays a role in the distribution and clearance of germ cell specific P-granules from somatic cells. Also plays a role in the autophagy-mediated degradation of ribosomal RNA and ribosomal proteins in lysosomes. Involved in xenophagy, the autophagy-mediated degradation of pathogens and pathogen products, such as toxins. Required for normal survival when exposed to pathogenic bacteria S.typhimurium probably by promoting autophagic degradation of intracellular S.typhimurium. Also plays a role in membrane-pore repair. Plays a role in mitophagy. Essential for dauer development and longevity, including longevity in response to moderate, short-term heat shock, also known as a hormetic heat shock. The sequence is that of Protein lgg-1 from Caenorhabditis elegans.